A 1340-amino-acid chain; its full sequence is Serine/threonine-protein phosphatase 7 long form homolog (1340 aa).

Residues Asp660 and His662 each contribute to the Mn(2+) site. His722 (proton donor) is an active-site residue. A Mn(2+)-binding site is contributed by His773. 4 disordered regions span residues 788-814 (QERN…DRSE), 1012-1093 (KSMD…SRTR), 1196-1218 (TDGA…SEDI), and 1266-1340 (FTNL…DMDS). A compositionally biased stretch (basic residues) spans 790–799 (RNRKRKRTQK). Positions 1018–1027 (EQMEVDEKDD) are enriched in acidic residues. Residues 1049–1080 (GDRDMVDFSDKTENGSKEADHSETAEISKDLS) show a composition bias toward basic and acidic residues. The span at 1203 to 1213 (EPSTSKLNYSE) shows a compositional bias: polar residues. 2 stretches are compositionally biased toward basic and acidic residues: residues 1266–1289 (FTNL…ERVI) and 1318–1328 (DSVDSKNKGSL).

Belongs to the PPP phosphatase family. PP-7 subfamily. Mn(2+) is required as a cofactor. Expressed in root tips, the shoot apical meristem (SAM), leaf vasculature, hydathodes and mature flowers.

It localises to the nucleus. It catalyses the reaction O-phospho-L-seryl-[protein] + H2O = L-seryl-[protein] + phosphate. It carries out the reaction O-phospho-L-threonyl-[protein] + H2O = L-threonyl-[protein] + phosphate. In terms of biological role, maybe required to maintain cell division activity in meristematic cells. The polypeptide is Serine/threonine-protein phosphatase 7 long form homolog (Arabidopsis thaliana (Mouse-ear cress)).